Reading from the N-terminus, the 104-residue chain is Small ribosomal subunit protein uS10 (104 aa).

This sequence belongs to the universal ribosomal protein uS10 family. In terms of assembly, part of the 30S ribosomal subunit.

In terms of biological role, involved in the binding of tRNA to the ribosomes. The polypeptide is Small ribosomal subunit protein uS10 (Xanthomonas oryzae pv. oryzae (strain MAFF 311018)).